Consider the following 119-residue polypeptide: Hisactophilin-3 (119 aa).

The N-myristoyl glycine moiety is linked to residue glycine 2. Positions 8-110 (SHHGHFLSAE…SIYTTHHHHH (103 aa)) are contains several HHXH repeats. A run of 2 repeats spans residues 34 to 47 (FHVE…VAIR) and 75 to 87 (FHLE…VSIK). Residues 34–87 (FHVENHGHHKVAIRTHANKYVSINDNNDVYISHHFHGEHSLFHLEHHGGKVSIK) form a 2 X 13 AA approximate repeats region.

It belongs to the hisactophilin family. Post-translationally, phosphorylated.

It is found in the cytoplasm. The protein localises to the cell membrane. Functionally, may act as an intracellular pH sensor that links chemotactic signals to responses in the microfilament system of the cells by nucleating actin polymerization or stabilizing the filaments. In Dictyostelium discoideum (Social amoeba), this protein is Hisactophilin-3 (hatC).